A 346-amino-acid polypeptide reads, in one-letter code: Protein pelota homolog (346 aa).

It belongs to the eukaryotic release factor 1 family. Pelota subfamily. As to quaternary structure, monomer. A divalent metal cation is required as a cofactor.

It is found in the cytoplasm. May function in recognizing stalled ribosomes, interact with stem-loop structures in stalled mRNA molecules, and effect endonucleolytic cleavage of the mRNA. May play a role in the release non-functional ribosomes and degradation of damaged mRNAs. Has endoribonuclease activity. The polypeptide is Protein pelota homolog (Ignicoccus hospitalis (strain KIN4/I / DSM 18386 / JCM 14125)).